We begin with the raw amino-acid sequence, 337 residues long: MSFTPANRAYPYTRLRRNRRDDFSRRLVRENVLTVDDLILPVFVLDGVNQRESIPSMPGVERLSIDQLLIEAEEWVALGIPALALFPVTPVEKKSLDAAEAYNPEGIAQRATRALRERFPELGIITDVALDPFTTHGQDGILDDDGYVLNDVSIDVLVRQALSHAEAGAQVVAPSDMMDGRIGAIREALESAGHTNVRIMAYSAKYASAYYGPFRDAVGSASNLGKGNKATYQMDPANSDEALHEVAADLAEGADMVMVKPGMPYLDIVRRVKDEFRAPTFVYQVSGEYAMHMGAIQNGWLAESVILESLTAFKRAGADGILTYFAKQAAEQLRRGR.

Residue Lys205 is the Schiff-base intermediate with substrate of the active site. The 5-aminolevulinate site is built by Arg215 and Lys229. Residue Glu245 participates in Mg(2+) binding. The Schiff-base intermediate with substrate role is filled by Lys260. 5-aminolevulinate contacts are provided by Ser286 and Tyr324.

It belongs to the ALAD family. As to quaternary structure, homooctamer; formed by oligomerization of dimers. Mg(2+) is required as a cofactor.

The enzyme catalyses 2 5-aminolevulinate = porphobilinogen + 2 H2O + H(+). It functions in the pathway porphyrin-containing compound metabolism; protoporphyrin-IX biosynthesis; coproporphyrinogen-III from 5-aminolevulinate: step 1/4. Its activity is regulated as follows. Stimulated by magnesium ions. In terms of biological role, catalyzes an early step in the biosynthesis of tetrapyrroles. Binds two molecules of 5-aminolevulinate per subunit, each at a distinct site, and catalyzes their condensation to form porphobilinogen. This chain is Delta-aminolevulinic acid dehydratase (hemB), found in Pseudomonas aeruginosa (strain ATCC 15692 / DSM 22644 / CIP 104116 / JCM 14847 / LMG 12228 / 1C / PRS 101 / PAO1).